A 205-amino-acid polypeptide reads, in one-letter code: Lymphotoxin-alpha (205 aa).

The signal sequence occupies residues 1–34 (MTPPERLFLPRVCGTTLHLLLLGLLLVLLPGAQG). Thr41 is a glycosylation site (O-linked (GalNAc...) threonine; partial). A THD domain is found at 63 to 205 (PAAHLIGDPS…STVFFGAFAL (143 aa)). Residue Asn96 is glycosylated (N-linked (GlcNAc...) asparagine).

This sequence belongs to the tumor necrosis factor family. Homotrimer, and heterotrimer of either two LTB and one LTA subunits or (less prevalent) two LTA and one LTB subunits. Interacts with TNFRSF14.

It localises to the secreted. The protein resides in the membrane. Cytokine that in its homotrimeric form binds to TNFRSF1A/TNFR1, TNFRSF1B/TNFBR and TNFRSF14/HVEM. In its heterotrimeric form with LTB binds to TNFRSF3/LTBR. Lymphotoxin is produced by lymphocytes and is cytotoxic for a wide range of tumor cells in vitro and in vivo. In Homo sapiens (Human), this protein is Lymphotoxin-alpha (LTA).